We begin with the raw amino-acid sequence, 502 residues long: Probable cytosol aminopeptidase (502 aa).

The Mn(2+) site is built by Lys269 and Asp274. Lys281 is a catalytic residue. 3 residues coordinate Mn(2+): Asp292, Asp351, and Glu353. Arg355 is a catalytic residue.

The protein belongs to the peptidase M17 family. Requires Mn(2+) as cofactor.

It localises to the cytoplasm. The catalysed reaction is Release of an N-terminal amino acid, Xaa-|-Yaa-, in which Xaa is preferably Leu, but may be other amino acids including Pro although not Arg or Lys, and Yaa may be Pro. Amino acid amides and methyl esters are also readily hydrolyzed, but rates on arylamides are exceedingly low.. It catalyses the reaction Release of an N-terminal amino acid, preferentially leucine, but not glutamic or aspartic acids.. In terms of biological role, presumably involved in the processing and regular turnover of intracellular proteins. Catalyzes the removal of unsubstituted N-terminal amino acids from various peptides. This chain is Probable cytosol aminopeptidase, found in Shewanella frigidimarina (strain NCIMB 400).